A 239-amino-acid polypeptide reads, in one-letter code: Ribosomal RNA small subunit methyltransferase G (239 aa).

S-adenosyl-L-methionine is bound by residues G76, F81, 99–101 (DSS), 128–129 (IE), and R147.

The protein belongs to the methyltransferase superfamily. RNA methyltransferase RsmG family.

The protein localises to the cytoplasm. Its function is as follows. Specifically methylates the N7 position of a guanine in 16S rRNA. In Prochlorococcus marinus subsp. pastoris (strain CCMP1986 / NIES-2087 / MED4), this protein is Ribosomal RNA small subunit methyltransferase G.